A 126-amino-acid chain; its full sequence is Arginine decarboxylase proenzyme (126 aa).

Residue Ser-74 is the Schiff-base intermediate with substrate; via pyruvic acid of the active site. At Ser-74 the chain carries Pyruvic acid (Ser); by autocatalysis. His-79 serves as the catalytic Proton acceptor; for processing activity. Cys-94 (proton donor; for catalytic activity) is an active-site residue.

The protein belongs to the prokaryotic AdoMetDC family. Type 1 subfamily. In terms of assembly, heterooctamer of four alpha and four beta chains arranged as a tetramer of alpha/beta heterodimers. Requires pyruvate as cofactor. Is synthesized initially as an inactive proenzyme. Formation of the active enzyme involves a self-maturation process in which the active site pyruvoyl group is generated from an internal serine residue via an autocatalytic post-translational modification. Two non-identical subunits are generated from the proenzyme in this reaction, and the pyruvate is formed at the N-terminus of the alpha chain, which is derived from the carboxyl end of the proenzyme. The post-translation cleavage follows an unusual pathway, termed non-hydrolytic serinolysis, in which the side chain hydroxyl group of the serine supplies its oxygen atom to form the C-terminus of the beta chain, while the remainder of the serine residue undergoes an oxidative deamination to produce ammonia and the pyruvoyl group blocking the N-terminus of the alpha chain.

The catalysed reaction is L-arginine + H(+) = agmatine + CO2. It participates in amine and polyamine biosynthesis; agmatine biosynthesis; agmatine from L-arginine: step 1/1. Specifically catalyzes the decarboxylation of L-arginine to agmatine. Has no S-adenosylmethionine decarboxylase (AdoMetDC) activity. The polypeptide is Arginine decarboxylase proenzyme (Pyrobaculum aerophilum (strain ATCC 51768 / DSM 7523 / JCM 9630 / CIP 104966 / NBRC 100827 / IM2)).